The chain runs to 208 residues: ATP synthase subunit b 1 (208 aa).

Residues 1-18 (MFVSTAFAQTATESQPAS) are compositionally biased toward polar residues. The segment at 1–26 (MFVSTAFAQTATESQPASTAGEHGAA) is disordered. The helical transmembrane segment at 56-78 (SQVLWLAITFGLFYLFLSRVVLP) threads the bilayer.

Belongs to the ATPase B chain family. In terms of assembly, F-type ATPases have 2 components, F(1) - the catalytic core - and F(0) - the membrane proton channel. F(1) has five subunits: alpha(3), beta(3), gamma(1), delta(1), epsilon(1). F(0) has three main subunits: a(1), b(2) and c(10-14). The alpha and beta chains form an alternating ring which encloses part of the gamma chain. F(1) is attached to F(0) by a central stalk formed by the gamma and epsilon chains, while a peripheral stalk is formed by the delta and b chains.

It localises to the cell inner membrane. In terms of biological role, f(1)F(0) ATP synthase produces ATP from ADP in the presence of a proton or sodium gradient. F-type ATPases consist of two structural domains, F(1) containing the extramembraneous catalytic core and F(0) containing the membrane proton channel, linked together by a central stalk and a peripheral stalk. During catalysis, ATP synthesis in the catalytic domain of F(1) is coupled via a rotary mechanism of the central stalk subunits to proton translocation. Its function is as follows. Component of the F(0) channel, it forms part of the peripheral stalk, linking F(1) to F(0). This is ATP synthase subunit b 1 from Brucella abortus (strain 2308).